A 337-amino-acid chain; its full sequence is Glyceraldehyde-3-phosphate dehydrogenase, cytosolic (337 aa).

Residues Arg13–Ile14, Asp35, and Arg82 each bind NAD(+). Residues Ser153 to Thr155, Thr184, Thr213 to Gly214, and Arg236 each bind D-glyceraldehyde 3-phosphate. Catalysis depends on Cys154, which acts as the Nucleophile. An NAD(+)-binding site is contributed by Asn318.

The protein belongs to the glyceraldehyde-3-phosphate dehydrogenase family. In terms of assembly, homotetramer.

Its subcellular location is the cytoplasm. The enzyme catalyses D-glyceraldehyde 3-phosphate + phosphate + NAD(+) = (2R)-3-phospho-glyceroyl phosphate + NADH + H(+). It participates in carbohydrate degradation; glycolysis; pyruvate from D-glyceraldehyde 3-phosphate: step 1/5. Its function is as follows. Key enzyme in glycolysis that catalyzes the first step of the pathway by converting D-glyceraldehyde 3-phosphate (G3P) into 3-phospho-D-glyceroyl phosphate. Essential for the maintenance of cellular ATP levels and carbohydrate metabolism. This chain is Glyceraldehyde-3-phosphate dehydrogenase, cytosolic (GAPC), found in Antirrhinum majus (Garden snapdragon).